The primary structure comprises 123 residues: Ig heavy chain V region HPCG13 (123 aa).

An Ig-like domain is found at 1 to 114 (EVKLVESGGG…GSYWYFDVWG (114 aa)).

This chain is Ig heavy chain V region HPCG13, found in Mus musculus (Mouse).